A 61-amino-acid chain; its full sequence is Large ribosomal subunit protein uL30 (61 aa).

It belongs to the universal ribosomal protein uL30 family. As to quaternary structure, part of the 50S ribosomal subunit.

The polypeptide is Large ribosomal subunit protein uL30 (Lacticaseibacillus casei (strain BL23) (Lactobacillus casei)).